Consider the following 423-residue polypeptide: Protein CLP1 homolog (423 aa).

ATP contacts are provided by residues Glu-16, Lys-57, and 119-124; that span reads DVGKST.

Belongs to the Clp1 family. Clp1 subfamily.

It is found in the nucleus. Functionally, required for endonucleolytic cleavage during polyadenylation-dependent pre-mRNA 3'-end formation. The chain is Protein CLP1 homolog (cbc) from Drosophila melanogaster (Fruit fly).